We begin with the raw amino-acid sequence, 445 residues long: Squalene synthase (445 aa).

Transmembrane regions (helical) follow at residues 291 to 311 (STFTFCAIPQVMAIATLDLVY) and 405 to 425 (LIVCLAVIFSMSGLMAYIAYV).

The protein belongs to the phytoene/squalene synthase family. It depends on Mg(2+) as a cofactor.

It localises to the endoplasmic reticulum membrane. The enzyme catalyses 2 (2E,6E)-farnesyl diphosphate + NADPH + H(+) = squalene + 2 diphosphate + NADP(+). It carries out the reaction 2 (2E,6E)-farnesyl diphosphate + NADH + H(+) = squalene + 2 diphosphate + NAD(+). It participates in terpene metabolism; lanosterol biosynthesis; lanosterol from farnesyl diphosphate: step 1/3. Functionally, catalyzes the condensation of 2 two farnesyl pyrophosphate moieties to form squalene. It is the first committed enzyme of the sterol biosynthesis pathway. Required for the biosynthesis of ergosterol. The protein is Squalene synthase (SQS1) of Yarrowia lipolytica (strain CLIB 122 / E 150) (Yeast).